We begin with the raw amino-acid sequence, 825 residues long: Leucine-rich repeat and guanylate kinase domain-containing protein (825 aa).

Residues Asp73–Leu96 form a disordered region. LRR repeat units lie at residues Tyr129–Val149, His150–Pro171, Tyr172–Lys193, Asn194–His215, Ala216–Asn237, Asn238–Pro259, Ile260–Lys280, Ala281–Asp302, and Leu303–Lys324. One can recognise an LRRCT domain in the interval Asn337–Lys375. A Guanylate kinase-like domain is found at Tyr414 to Arg597. Residue Gly421–Arg428 coordinates ATP. A disordered region spans residues Pro760–Arg825. Residues Ser763–Asp774 are compositionally biased toward polar residues. Pro residues predominate over residues Thr816–Arg825.

As to quaternary structure, interacts (via guanylate kinase-like domain) with RIMBP3 (via coiled-coil region). Interacts (via guanylate kinase-like domain) with HOOK2. Interacts (via LRRCT domain) with KLC3. Interacts with HOOK1 and HOOK3.

Its subcellular location is the cytoplasmic vesicle. The protein localises to the secretory vesicle. It localises to the acrosome. The protein resides in the cytoplasm. It is found in the cytoskeleton. Its subcellular location is the cilium basal body. Functionally, involved in multiple aspects of sperm assembly including acrosome attachment, shaping of the sperm head and in the early aspects of axoneme development. Not essential for primary cilium biogenesis. The protein is Leucine-rich repeat and guanylate kinase domain-containing protein (LRGUK) of Homo sapiens (Human).